We begin with the raw amino-acid sequence, 65 residues long: Photosystem II reaction center protein J (65 aa).

Residues 35 to 55 (LWLVATAGGTAVIFVLGIFFY) traverse the membrane as a helical segment.

This sequence belongs to the PsbJ family. PSII is composed of 1 copy each of membrane proteins PsbA, PsbB, PsbC, PsbD, PsbE, PsbF, PsbH, PsbI, PsbJ, PsbK, PsbL, PsbM, PsbT, PsbX, PsbY, Psb30/Ycf12, peripheral proteins PsbO, CyanoQ (PsbQ), PsbU, PsbV and a large number of cofactors. It forms dimeric complexes.

It localises to the cellular thylakoid membrane. Its function is as follows. One of the components of the core complex of photosystem II (PSII). PSII is a light-driven water:plastoquinone oxidoreductase that uses light energy to abstract electrons from H(2)O, generating O(2) and a proton gradient subsequently used for ATP formation. It consists of a core antenna complex that captures photons, and an electron transfer chain that converts photonic excitation into a charge separation. The sequence is that of Photosystem II reaction center protein J from Prochlorococcus marinus (strain NATL2A).